Here is a 325-residue protein sequence, read N- to C-terminus: Foldase protein PrsA (325 aa).

The signal sequence occupies residues Met1–Ala20. A lipid anchor (N-palmitoyl cysteine) is attached at Cys21. A lipid anchor (S-diacylglycerol cysteine) is attached at Cys21. Positions Glu139–Lys245 constitute a PpiC domain. Disordered stretches follow at residues Glu159–Gly202 and Pro303–Ser325.

Belongs to the PrsA family.

The protein localises to the cell membrane. The catalysed reaction is [protein]-peptidylproline (omega=180) = [protein]-peptidylproline (omega=0). Functionally, plays a major role in protein secretion by helping the post-translocational extracellular folding of several secreted proteins. The chain is Foldase protein PrsA from Staphylococcus epidermidis (strain ATCC 12228 / FDA PCI 1200).